A 200-amino-acid chain; its full sequence is Small ribosomal subunit protein uS4 (200 aa).

The segment at 20-41 is disordered; the sequence is TGTGKELDKRPYAPGQHGPNQR. An S4 RNA-binding domain is found at 92–152; the sequence is SRLDNLVYRL…EKSKNLDVVK (61 aa).

This sequence belongs to the universal ribosomal protein uS4 family. As to quaternary structure, part of the 30S ribosomal subunit. Contacts protein S5. The interaction surface between S4 and S5 is involved in control of translational fidelity.

Its function is as follows. One of the primary rRNA binding proteins, it binds directly to 16S rRNA where it nucleates assembly of the body of the 30S subunit. In terms of biological role, with S5 and S12 plays an important role in translational accuracy. This is Small ribosomal subunit protein uS4 from Oceanobacillus iheyensis (strain DSM 14371 / CIP 107618 / JCM 11309 / KCTC 3954 / HTE831).